An 87-amino-acid chain; its full sequence is A-agglutinin-binding subunit (87 aa).

Residues 1-18 (MQLLRCFSIFSVIASVLA) form the signal peptide. O-linked (Man...) threonine glycosylation occurs at Thr22. Ser30 is a glycosylation site (O-linked (Man...) serine). A glycan (O-linked (Man...) threonine) is linked at Thr32. Residue Ser39 is glycosylated (O-linked (Man...) serine). The O-linked (Man...) threonine glycan is linked to Thr63. An O-linked (Man...) serine glycan is attached at Ser66. O-linked (Man...) threonine glycosylation is present at Thr75.

Heterodimer; disulfide-linked. Interacts with SAG1.

Receptor binding subunit of the a-agglutinin heterodimer. S.cerevisiae a and alpha cells express the complementary cell surface glycoproteins a-agglutinin and alpha-agglutinin, respectively, which interact with one another to promote cellular aggregation during mating. This Saccharomyces cerevisiae (strain ATCC 204508 / S288c) (Baker's yeast) protein is A-agglutinin-binding subunit (AGA2).